A 425-amino-acid polypeptide reads, in one-letter code: MMSKRCLKRNQTLIPELLKNHGALLYGDTSVVDLSTAENQLLMEELLPEFQAAFDANTWSSQELAYSEGVGGCPKVRGLIADLVNSHFQPHAQVDKSHIVLGAGGCFALNALIEAICDPGDGILIAAPYWPGLDLSISVHNDAKAVVVRVPHEDFFRVESIRHYSKALLSAPNLVKAMIICNPHNPLGRNYPRETLQAIVDFCAERQIHLISDEVYALSQHVQPTSENPSAGFVSALSLDASHARGLVHVVYSLSKDFGCNGIRLGAFISQDNKAVVMSGALSTHCQTSTMATLVAQKIILTDENIQFVNTYGRGLLKSAYTVMEEFLNQHRIEFVSAECGMYIFAKLCGDRTSVDDEWLFQAILRRNGLVLSAGTDYHCKTPGWFRICYGCDREKLRHGLDRLRDCLQEFGETEFKFPFNDACF.

The residue at position 256 (Lys256) is an N6-(pyridoxal phosphate)lysine.

Belongs to the class-I pyridoxal-phosphate-dependent aminotransferase family. Pyridoxal 5'-phosphate serves as cofactor.

The protein operates within secondary metabolite biosynthesis. Probable aminotransferase; part of the gene cluster that mediates the biosynthesis of an unusual class of epipolythiodioxopiperazines (ETPs) lacking the reactive thiol group important for toxicity. Firstly, L-tyrosine is prenylated by tcpD, before undergoing condensation with L-glycine in a reaction catalyzed by the NRPS tcpP leading to the diketopiperazine (DKP) backbone. Afterwards the alpha-carbon of tyrosine is oxidized by the cytochrome P450 tcpC to form a hydroxyl group. However, in contrast other ETP biosynthesis pathways studied so far, tcpC is not able to bishydroxylate the DKP at both alpha-carbon positions, but hydroxylates the alpha-carbon of the tyrosine part and the nitrogen of the glycine part. The next steps involve an alpha,beta-elimination reaction catalyzed by tcpI, a methylation by the methyltransferase tcpN the action of the four enzyme cascade tcpG/K/J/I. Due to a dysfunctional cytochrome P450 monooxygenase tcpC, the pathway leads to the biosynthesis of probable non-toxic metabolites lacking the reactive thiol group. The protein is Probable aminotransferase tcpI of Claviceps purpurea (strain 20.1) (Ergot fungus).